The chain runs to 417 residues: Fatty-acid peroxygenase (417 aa).

A heme-binding site is contributed by Cys363.

This sequence belongs to the cytochrome P450 family. The cofactor is heme.

The enzyme catalyses a 1,2-saturated fatty acid + H2O2 = a 2-hydroxy fatty acid + H2O. It carries out the reaction a 2,3-saturated fatty acid + H2O2 = a 3-hydroxy fatty acid + H2O. The catalysed reaction is tetradecanoate + H2O2 = (3R)-hydroxytetradecanoate + H2O. It catalyses the reaction tetradecanoate + H2O2 = (2R)-hydroxytetradecanoate + H2O. The enzyme catalyses tetradecanoate + H2O2 = (2S)-hydroxytetradecanoate + H2O. Functionally, catalyzes the alpha- and beta-hydroxylation of myristic acid in the presence of hydrogen peroxide. This is Fatty-acid peroxygenase (cypC) from Bacillus subtilis (strain 168).